The chain runs to 180 residues: MKGGKRVQPARPNRINREIRANEVRLTGVEGEQLGIVSLNEALEKAEEAGVDLVEISPNAEPPVCRIMDYGKFLYEKSKATKEQKKKQKVIQVKEIKFRPGTDDGDYQVKLRNLIRFLEDGDKAKITLRFRGREMAHQQIGIEVLNRVRDDLSELAVVESFPSKIEGRQMIMVLAPKKKQ.

The protein belongs to the IF-3 family. Monomer.

The protein resides in the cytoplasm. IF-3 binds to the 30S ribosomal subunit and shifts the equilibrium between 70S ribosomes and their 50S and 30S subunits in favor of the free subunits, thus enhancing the availability of 30S subunits on which protein synthesis initiation begins. The protein is Translation initiation factor IF-3 of Pectobacterium atrosepticum (strain SCRI 1043 / ATCC BAA-672) (Erwinia carotovora subsp. atroseptica).